The following is a 295-amino-acid chain: MGSRAELHTLLGGLSFLLLLMSGQGAKGGSFKESQGVCSRQTLVVPLRYNESYSQPVYKPYLTLCPGRRVCSTYRTTYRVAWREVRREVQQTHAVCCQGWKKRHPGALTCDEAICAKPCQNGGVCVRPDQCECAPGWGGRHCHVDVDECRTGVTLCSHRCHNTAGSFTCGCPHGLVLGPDGRTCAEGASEPPTSASILSVAVREAGREDRALRREIRELRGRLERLEQWAGQAGAWVRAVLPMPPEELQPEQVAELWGRGDRIESLSDQVLLLEEKLGACSCEDNSLGPGLSRRR.

Positions 1 to 25 (MGSRAELHTLLGGLSFLLLLMSGQG) are cleaved as a signal peptide. In terms of domain architecture, EMI spans 34–112 (SQGVCSRQTL…RHPGALTCDE (79 aa)). 9 disulfide bridges follow: C38–C97, C65–C71, C96–C110, C115–C125, C119–C131, C133–C142, C149–C160, C156–C169, and C171–C184. N50 carries an N-linked (GlcNAc...) asparagine glycan. Residues 111 to 143 (DEAICAKPCQNGGVCVRPDQCECAPGWGGRHCH) enclose the EGF-like 1 domain. The 41-residue stretch at 145 to 185 (DVDECRTGVTLCSHRCHNTAGSFTCGCPHGLVLGPDGRTCA) folds into the EGF-like 2; calcium-binding domain. Positions 202–233 (VREAGREDRALRREIRELRGRLERLEQWAGQA) form a coiled coil.

The protein localises to the secreted. The chain is Epidermal growth factor-like protein 8 (EGFL8) from Sus scrofa (Pig).